Here is a 122-residue protein sequence, read N- to C-terminus: Alkene monooxygenase system, ferredoxin component (122 aa).

In terms of domain architecture, Rieske spans 16 to 111 (VDVCAVDDLW…LKVEGGRVLI (96 aa)). [2Fe-2S] cluster-binding residues include Cys55, His57, Cys75, and His78.

This sequence belongs to the bacterial ring-hydroxylating dioxygenase ferredoxin component family. Homodimer. The alkene monooxygenase multicomponent enzyme system is composed of an electron transfer component and a monooxygenase component interacting with the effector protein XamoD. The electron transfer component is composed of a ferredoxin reductase (XamoF) and a ferredoxin (XamoC), and the monooxygenase component is formed by a heterohexamer (dimer of heterotrimers) of two alpha subunits (XamoA), two beta subunits (XamoE) and two gamma subunits (XamoB). It depends on [2Fe-2S] cluster as a cofactor.

It is found in the cytoplasm. Functionally, ferredoxin component of the alkene monooxygenase multicomponent enzyme system which catalyzes the O2- and NADH-dependent epoxidation of short chain (C2 to C6) alkenes to their corresponding epoxides. Functions as an intermediate electron transfer protein. This is Alkene monooxygenase system, ferredoxin component from Xanthobacter autotrophicus (strain ATCC BAA-1158 / Py2).